A 155-amino-acid polypeptide reads, in one-letter code: MAEKMNVESFNLDHTKVKAPFVRLAGTKVGVHGDEIYKYDVRFKQPNKEHMEMPALHSLEHLMAELARNHTDKLVDISPMGCQTGFYVSFINHSDYDDALEIIATTLTDVLAATEVPACNEVQCGWAASHSLEGAKALAAEFLDKRDEWKNVFGE.

Positions 57, 61, and 124 each coordinate Fe cation.

The protein belongs to the LuxS family. In terms of assembly, homodimer. The cofactor is Fe cation.

The catalysed reaction is S-(5-deoxy-D-ribos-5-yl)-L-homocysteine = (S)-4,5-dihydroxypentane-2,3-dione + L-homocysteine. Involved in the synthesis of autoinducer 2 (AI-2) which is secreted by bacteria and is used to communicate both the cell density and the metabolic potential of the environment. The regulation of gene expression in response to changes in cell density is called quorum sensing. Catalyzes the transformation of S-ribosylhomocysteine (RHC) to homocysteine (HC) and 4,5-dihydroxy-2,3-pentadione (DPD). The sequence is that of S-ribosylhomocysteine lyase from Listeria monocytogenes serotype 4b (strain CLIP80459).